A 598-amino-acid polypeptide reads, in one-letter code: Elongation factor 4 (598 aa).

Residues 2–184 (KNIRNFSIIA…EIVHKIPAPE (183 aa)) form the tr-type G domain. GTP is bound by residues 14–19 (DHGKST) and 131–134 (NKID).

Belongs to the TRAFAC class translation factor GTPase superfamily. Classic translation factor GTPase family. LepA subfamily.

The protein localises to the cell inner membrane. The enzyme catalyses GTP + H2O = GDP + phosphate + H(+). In terms of biological role, required for accurate and efficient protein synthesis under certain stress conditions. May act as a fidelity factor of the translation reaction, by catalyzing a one-codon backward translocation of tRNAs on improperly translocated ribosomes. Back-translocation proceeds from a post-translocation (POST) complex to a pre-translocation (PRE) complex, thus giving elongation factor G a second chance to translocate the tRNAs correctly. Binds to ribosomes in a GTP-dependent manner. The chain is Elongation factor 4 from Pasteurella multocida (strain Pm70).